The chain runs to 312 residues: Very-long-chain 3-oxoacyl-CoA reductase (312 aa).

A helical transmembrane segment spans residues 4 to 24 (ALPAAGFLYWVGAGTVAYLAL). An NADP(+)-binding site is contributed by 50–79 (GEWAVVTGGTDGIGKSYAEELAKRGMKVVL). 2 helical membrane passes run 182-202 (GAILNISSGSGMFPVPLLTIY) and 271-291 (GYLIHVLMGWIISNLPSWIYL). S189 provides a ligand contact to substrate. The active-site Proton acceptor is Y202. The Di-lysine motif signature appears at 308–312 (KIKKN).

It belongs to the short-chain dehydrogenases/reductases (SDR) family. 17-beta-HSD 3 subfamily.

It is found in the endoplasmic reticulum membrane. The enzyme catalyses a very-long-chain (3R)-3-hydroxyacyl-CoA + NADP(+) = a very-long-chain 3-oxoacyl-CoA + NADPH + H(+). The catalysed reaction is 17beta-estradiol + NAD(+) = estrone + NADH + H(+). It carries out the reaction 17beta-estradiol + NADP(+) = estrone + NADPH + H(+). It catalyses the reaction 3-oxooctadecanoyl-CoA + NADPH + H(+) = (3R)-hydroxyoctadecanoyl-CoA + NADP(+). The enzyme catalyses (7Z,10Z,13Z,16Z)-3-oxodocosatetraenoyl-CoA + NADPH + H(+) = (3R)-hydroxy-(7Z,10Z,13Z,16Z)-docosatetraenoyl-CoA + NADP(+). The catalysed reaction is 3-oxo-(7Z,10Z,13Z,16Z,19Z)-docosapentaenoyl-CoA + NADPH + H(+) = (3R)-hydroxy-(7Z,10Z,13Z,16Z,19Z)-docosapentaenoyl-CoA + NADP(+). It carries out the reaction (8Z,11Z,14Z)-3-oxoeicosatrienoyl-CoA + NADPH + H(+) = (3R)-hydroxy-(8Z,11Z,14Z)-eicosatrienoyl-CoA + NADP(+). It functions in the pathway lipid metabolism; fatty acid biosynthesis. It participates in steroid biosynthesis; estrogen biosynthesis. Its function is as follows. Catalyzes the second of the four reactions of the long-chain fatty acids elongation cycle. This endoplasmic reticulum-bound enzymatic process, allows the addition of two carbons to the chain of long- and very long-chain fatty acids/VLCFAs per cycle. This enzyme has a 3-ketoacyl-CoA reductase activity, reducing 3-ketoacyl-CoA to 3-hydroxyacyl-CoA, within each cycle of fatty acid elongation. Thereby, it may participate in the production of VLCFAs of different chain lengths that are involved in multiple biological processes as precursors of membrane lipids and lipid mediators. May also catalyze the transformation of estrone (E1) into estradiol (E2) and play a role in estrogen formation. This chain is Very-long-chain 3-oxoacyl-CoA reductase (HSD17B12), found in Macaca fascicularis (Crab-eating macaque).